The chain runs to 1283 residues: Rab11 family-interacting protein 1 (1283 aa).

One can recognise a C2 domain in the interval 1 to 126 (MSLMVSAGRG…DQGRRKTQWY (126 aa)). A compositionally biased stretch (basic and acidic residues) spans 161–185 (SMKDKSRNPFGKLKDKIKGKNKDSG). The tract at residues 161-281 (SMKDKSRNPF…VMSHKRTAST (121 aa)) is disordered. A phosphoserine mark is found at Ser-184, Ser-202, Ser-206, and Ser-234. The span at 225 to 239 (NLQKTPLSQSMSVLP) shows a compositional bias: polar residues. Over residues 257–266 (WDEDDNEDES) the composition is skewed to acidic residues. Phosphoserine is present on residues Ser-300, Ser-315, Ser-339, Ser-341, Ser-343, Ser-345, Ser-356, Ser-357, and Ser-382. Disordered regions lie at residues 330–727 (EAKG…QEVP), 741–782 (VGEL…ASVP), 835–913 (PQEL…LFRM), 969–993 (DERIDQVEDDGDQVEDDGETAKSST), and 1037–1141 (ASVT…RVEN). Basic and acidic residues predominate over residues 419–433 (ATKEAKESKKPESRR). The residue at position 435 (Ser-435) is a Phosphoserine. Residues 442–451 (GKKDVAKGSE) are compositionally biased toward basic and acidic residues. Ser-477 bears the Phosphoserine mark. Positions 482–491 (DLVRRSEKDT) are enriched in basic and acidic residues. Residues Ser-529 and Ser-545 each carry the phosphoserine modification. Low complexity predominate over residues 588–612 (SSESPSVFSSLSSPIAAPISTSTPI). Polar residues predominate over residues 637–652 (QTESLTPVPNSGSSAL). Positions 698-715 (ETGRQEEELPRFPCKKQD) are enriched in basic and acidic residues. Ser-758 bears the Phosphoserine mark. A compositionally biased stretch (basic and acidic residues) spans 855-866 (ESPHAEDSERES). Residues 975-986 (VEDDGDQVEDDG) show a composition bias toward acidic residues. Residues 1037–1048 (ASVTAPSEQTTE) are compositionally biased toward polar residues. The span at 1116–1131 (SDTHHTSTAESQKKAT) shows a compositional bias: basic and acidic residues. The residue at position 1135 (Ser-1135) is a Phosphoserine. The FIP-RBD domain occupies 1211 to 1273 (KKYSPSDPAF…EETPNILRIP (63 aa)). The interval 1219 to 1283 (AFAYAQLTHD…TQVGKKAGKM (65 aa)) is necessary for interaction with RAB4A and RAB11A, subcellular location and endosomal recycling.

In terms of assembly, interacts with RAB11A (GTP-bound form); the interaction induces RAB11FIP1 recruitment to membranes. Interacts with RAB14 (GTP-bound form). Homooligomer. Isoform 2 interacts with RAB4A, RAB11A, RAB11B and RAB25. According to PubMed:15280022, RAB4A binding to RAB11FIP1 is of very low affinity in vitro and in vivo. In terms of tissue distribution, isoform 2 is expressed in brain, heart, testis, lung, spleen, ovary and small intestine.

The protein localises to the recycling endosome. It is found in the cytoplasmic vesicle. The protein resides in the phagosome membrane. Functionally, a Rab11 effector protein involved in the endosomal recycling process. Also involved in controlling membrane trafficking along the phagocytic pathway and in phagocytosis. Interaction with RAB14 may function in the process of neurite formation. The polypeptide is Rab11 family-interacting protein 1 (Homo sapiens (Human)).